A 205-amino-acid polypeptide reads, in one-letter code: Ras-related protein RABC2b (205 aa).

20–27 is a binding site for GTP; that stretch reads GDSGVGKS. Residues 41–49 carry the Effector region motif; it reads LAPTIGVDF. Residues 67–71, 127–130, and 157–158 contribute to the GTP site; these read DTAGQ, NKVD, and SA. Residues cysteine 202 and cysteine 203 are each lipidated (S-geranylgeranyl cysteine).

The protein belongs to the small GTPase superfamily. Rab family.

Its subcellular location is the cell membrane. Its function is as follows. Intracellular vesicle trafficking and protein transport. This Arabidopsis thaliana (Mouse-ear cress) protein is Ras-related protein RABC2b (RABC2B).